We begin with the raw amino-acid sequence, 466 residues long: MALLTAAARLLGAKNSSCLVLAARHASASSTNLKDILSNLIPKEQARVKTFRQQHGKTVVGQITVDMMYGGMRGMKGLVYETSVLDPDEGIRFRGYSIPECQKLLPKAKGGEEPLPEGLFWLLVTGQMPTEEQVSWLSQEWAKRAALPSHVVTMLDNFPTNLHPMSQLSAAITALNSESNFARAYAEGINRTKYWELIYEDCMDLIAKLPCVAAKIYRNLYREGSSIGAIDSKLDWSHNFTNMLCYTEPQFTELMRLYLTIHSDHDGGNVSAHTSHLVGSALSDTYLSFAAAMNGLAGPLHGLANQEVLVWLTQLQKEVGKDVSDEKLRDYIWNTLNSGRVVPGYGHAVLRKTDPRYSCQREFALKHLPKDPMFKLVAQLYKIVPNILLEQGKAKNPWPNVDAHSGVLLQYYGMTEMNYYTVLFGVSRALGVLAQLIWSRALGFPLERPKSMSTDGLMKFVDSKSG.

A mitochondrion-targeting transit peptide spans 1-27 (MALLTAAARLLGAKNSSCLVLAARHAS). The SIFI-degron signature appears at 2 to 21 (ALLTAAARLLGAKNSSCLVL). N6-succinyllysine is present on Lys57. Lys76 is subject to N6-acetyllysine; alternate. Lys76 carries the N6-succinyllysine; alternate modification. An N6-succinyllysine mark is found at Lys103 and Lys193. The residue at position 226 (Ser226) is a Phosphoserine. The active site involves His301. Residues Lys321 and Lys327 each carry the N6-acetyllysine; alternate modification. Lys321 and Lys327 each carry N6-succinyllysine; alternate. His347 is an active-site residue. Arg356 is a binding site for oxaloacetate. Residue Lys375 is modified to N6-acetyllysine; alternate. N6-succinyllysine; alternate is present on Lys375. Position 382 is an N6-acetyllysine (Lys382). Lys393 is subject to N6-acetyllysine; alternate. An N6-succinyllysine; alternate modification is found at Lys393. Residue Lys395 is modified to N6,N6,N6-trimethyllysine. Asp402 is an active-site residue. The oxaloacetate site is built by Arg428 and Arg448. Position 450 is an N6-succinyllysine (Lys450). Lys459 bears the N6-acetyllysine; alternate mark. Lys459 is subject to N6-succinyllysine; alternate.

The protein belongs to the citrate synthase family. In terms of assembly, homodimer. In terms of processing, methylated. Trimethylation at Lys-395 by CSKMT decreases citrate synthase activity. In response to mitochondrial stress, the precursor protein is ubiquitinated by the SIFI complex in the cytoplasm before mitochondrial import, leading to its degradation. Within the SIFI complex, UBR4 initiates ubiquitin chain that are further elongated or branched by KCMF1. Expressed in the head region and flagellum of epididymal sperm.

It localises to the mitochondrion matrix. It catalyses the reaction oxaloacetate + acetyl-CoA + H2O = citrate + CoA + H(+). Its pathway is carbohydrate metabolism; tricarboxylic acid cycle; isocitrate from oxaloacetate: step 1/2. In terms of biological role, key enzyme of the Krebs tricarboxylic acid cycle which catalyzes the synthesis of citrate from acetyl coenzyme A and oxaloacetate. In Rattus norvegicus (Rat), this protein is Citrate synthase, mitochondrial (Cs).